Here is a 446-residue protein sequence, read N- to C-terminus: Phosphoglucosamine mutase (446 aa).

The active-site Phosphoserine intermediate is serine 102. Residues serine 102, aspartate 241, aspartate 243, and aspartate 245 each contribute to the Mg(2+) site. Position 102 is a phosphoserine (serine 102).

It belongs to the phosphohexose mutase family. The cofactor is Mg(2+). Post-translationally, activated by phosphorylation.

The catalysed reaction is alpha-D-glucosamine 1-phosphate = D-glucosamine 6-phosphate. Its function is as follows. Catalyzes the conversion of glucosamine-6-phosphate to glucosamine-1-phosphate. The polypeptide is Phosphoglucosamine mutase (Yersinia enterocolitica serotype O:8 / biotype 1B (strain NCTC 13174 / 8081)).